The sequence spans 175 residues: Nucleoside triphosphate/diphosphate phosphatase (175 aa).

R23 (proton donor) is an active-site residue. N87, D103, D105, D107, D120, and E123 together coordinate Mg(2+).

This sequence belongs to the Ntdp family. Requires Mg(2+) as cofactor.

The enzyme catalyses a ribonucleoside 5'-triphosphate + H2O = a ribonucleoside 5'-diphosphate + phosphate + H(+). It catalyses the reaction a ribonucleoside 5'-diphosphate + H2O = a ribonucleoside 5'-phosphate + phosphate + H(+). Has nucleoside phosphatase activity towards nucleoside triphosphates and nucleoside diphosphates. The protein is Nucleoside triphosphate/diphosphate phosphatase of Listeria innocua serovar 6a (strain ATCC BAA-680 / CLIP 11262).